Reading from the N-terminus, the 166-residue chain is Alanine racemase (166 aa).

The active-site Proton acceptor; specific for L-alanine is Tyr62. Position 110 (Met110) interacts with substrate.

It belongs to the alanine racemase family. The cofactor is pyridoxal 5'-phosphate.

It catalyses the reaction L-alanine = D-alanine. It participates in amino-acid biosynthesis; D-alanine biosynthesis; D-alanine from L-alanine: step 1/1. Functionally, catalyzes the interconversion of L-alanine and D-alanine. May also act on other amino acids. The chain is Alanine racemase (alr) from Piscirickettsia salmonis.